A 398-amino-acid chain; its full sequence is Acetyl-CoA acetyltransferase erg10B, cytosolic (398 aa).

The Acyl-thioester intermediate role is filled by Cys92. Residue Tyr187 participates in K(+) binding. Residues Asn229 and Lys232 each coordinate CoA. K(+) is bound by residues Ala249, Pro250, and Ser252. CoA is bound at residue Ser253. Residue Val350 coordinates K(+). Catalysis depends on proton acceptor residues His354 and Cys384. Residue Asn385 participates in chloride binding.

The protein belongs to the thiolase-like superfamily. Thiolase family. As to quaternary structure, homotetramer. K(+) is required as a cofactor.

The protein localises to the cytoplasm. It localises to the cytosol. The enzyme catalyses 2 acetyl-CoA = acetoacetyl-CoA + CoA. It functions in the pathway metabolic intermediate biosynthesis; (R)-mevalonate biosynthesis; (R)-mevalonate from acetyl-CoA: step 1/3. Its activity is regulated as follows. Activity is increased by monovalent cations such as K(+), Rb(+) or Cs(+). In terms of biological role, acetyl-CoA acetyltransferase; part of the first module of ergosterol biosynthesis pathway that includes the early steps of the pathway, conserved across all eukaryotes, and which results in the formation of mevalonate from acetyl-coenzyme A (acetyl-CoA). In this module, the cytosolic acetyl-CoA acetyltransferase erg10B catalyzes the formation of acetoacetyl-CoA. The hydroxymethylglutaryl-CoA synthases AFUA_8G07210 and AFUA_3G10660 then condense acetyl-CoA with acetoacetyl-CoA to form HMG-CoA. The rate-limiting step of the early module is the reduction to mevalonate by the 3-hydroxy-3-methylglutaryl-coenzyme A (HMG-CoA) reductases hmg1 and hmg2. Mevalonate is also a precursor for the extracellular siderophore triacetylfusarinine C (TAFC). This Aspergillus fumigatus (strain CBS 144.89 / FGSC A1163 / CEA10) (Neosartorya fumigata) protein is Acetyl-CoA acetyltransferase erg10B, cytosolic.